We begin with the raw amino-acid sequence, 267 residues long: Methylglyoxal reductase DkgB (267 aa).

Tyrosine 39 serves as the catalytic Proton donor. Histidine 97 serves as a coordination point for substrate. 179–231 (MTLAYGKALKDEVIARIAAKHNATPAQVILAWAMGEGYSVIPSSTKRENLESN) lines the NADP(+) pocket.

This sequence belongs to the aldo/keto reductase family. As to quaternary structure, monomer.

The protein localises to the cytoplasm. It catalyses the reaction hydroxyacetone + NADP(+) = methylglyoxal + NADPH + H(+). In terms of biological role, aldo-keto reductase that significantly contributes to cellular methylglyoxal detoxification by catalyzing the NADPH-dependent conversion of methylglyoxal to acetol. The chain is Methylglyoxal reductase DkgB from Escherichia coli O157:H7.